The following is a 127-amino-acid chain: Small ribosomal subunit protein uS13 (127 aa).

The segment at 96–127 (LPCHGQRTSTNARTRKGPKRTAVKKKGAAKKK) is disordered. The segment covering 108–127 (RTRKGPKRTAVKKKGAAKKK) has biased composition (basic residues).

Belongs to the universal ribosomal protein uS13 family. In terms of assembly, part of the 30S ribosomal subunit. Forms a loose heterodimer with protein S19. Forms two bridges to the 50S subunit in the 70S ribosome.

Functionally, located at the top of the head of the 30S subunit, it contacts several helices of the 16S rRNA. In the 70S ribosome it contacts the 23S rRNA (bridge B1a) and protein L5 of the 50S subunit (bridge B1b), connecting the 2 subunits; these bridges are implicated in subunit movement. Contacts the tRNAs in the A and P-sites. The polypeptide is Small ribosomal subunit protein uS13 (Desulfosudis oleivorans (strain DSM 6200 / JCM 39069 / Hxd3) (Desulfococcus oleovorans)).